We begin with the raw amino-acid sequence, 687 residues long: Dictomallein (687 aa).

2 disordered regions span residues 1 to 45 (MGNG…SRRL) and 73 to 112 (TAGG…STSA). Residues 233–501 (PVFGTDADVQ…QAWIASRVLA (269 aa)) enclose the Peptidase M66 domain. Residue His393 participates in Zn(2+) binding. Glu394 is an active-site residue. Residues His397 and His403 each coordinate Zn(2+).

It belongs to the dictomallein family. Zn(2+) is required as a cofactor.

The sequence is that of Dictomallein (dtmL) from Burkholderia pseudomallei (strain 668).